The following is a 442-amino-acid chain: Alpha-1,6-mannosyl-glycoprotein 2-beta-N-acetylglucosaminyltransferase (442 aa).

Residues M1 to K9 are Cytoplasmic-facing. A helical; Signal-anchor for type II membrane protein transmembrane segment spans residues V10–G29. The Lumenal portion of the chain corresponds to R30 to Q442. 2 N-linked (GlcNAc...) asparagine glycosylation sites follow: N64 and N81. Substrate contacts are provided by residues Q118–R122 and D149. Residues C191 and C205 are joined by a disulfide bond. Residue Q224 to H228 participates in substrate binding. A Mn(2+)-binding site is contributed by D256. C278 and C281 are oxidised to a cystine. Residue R293 participates in substrate binding. Cystine bridges form between C329–C352, C334–C435, and C373–C381. H369 provides a ligand contact to Mn(2+).

Belongs to the glycosyltransferase 16 (GT16) protein family. In terms of assembly, homodimer. The cofactor is Mn(2+). In terms of tissue distribution, detected in liver (at protein level). Detected in liver, brain, thymus and spleen.

The protein resides in the golgi apparatus membrane. The enzyme catalyses an N(4)-{beta-D-GlcNAc-(1-&gt;2)-alpha-D-Man-(1-&gt;3)-[alpha-D-Man-(1-&gt;6)]-beta-D-Man-(1-&gt;4)-beta-D-GlcNAc-(1-&gt;4)-beta-D-GlcNAc}-L-asparaginyl-[protein] + UDP-N-acetyl-alpha-D-glucosamine = N(4)-{beta-D-GlcNAc-(1-&gt;2)-alpha-D-Man-(1-&gt;3)-[beta-D-GlcNAc-(1-&gt;2)-alpha-D-Man-(1-&gt;6)]-beta-D-Man-(1-&gt;4)-beta-D-GlcNAc-(1-&gt;4)-beta-D-GlcNAc}-L-asparaginyl-[protein] + UDP + H(+). It participates in protein modification; protein glycosylation. Plays an essential role in protein N-glycosylation. Catalyzes the transfer of N-acetylglucosamine (GlcNAc) onto the free terminal mannose moiety in the core structure of the nascent N-linked glycan chain, giving rise to the second branch in complex glycans. The sequence is that of Alpha-1,6-mannosyl-glycoprotein 2-beta-N-acetylglucosaminyltransferase (Mgat2) from Rattus norvegicus (Rat).